Here is a 617-residue protein sequence, read N- to C-terminus: MVPVENTEGPSLLNQKGTAVETEGSGSRHPPWARGCGMFTFLSSVTAAVSGLLVGYELGIISGALLQIKTLLALSCHEQEMVVSSLVIGALLASLTGGVLIDRYGRRTAIILSSCLLGLGSLVLILSLSYTVLIVGRIAIGVSISLSSIATCVYIAEIAPQHRRGLLVSLNELMIVIGILSAYISNYAFANVFHGWKYMFGLVIPLGVLQAIAMYFLPPSPRFLVMKGQEGAASKVLGRLRALSDTTEELTVIKSSLKDEYQYSFWDLFRSKDNMRTRIMIGLTLVFFVQITGQPNILFYASTVLKSVGFQSNEAASLASTGVGVVKVISTIPATLLVDHVGSKTFLCIGSSVMAASLVTMGIVNLNIHMNFTHICRSHNSINQSLDESVIYGPGNLSTNNNTLRDHFKGISSHSRSSLMPLRNDVDKRGETTSASLLNAGLSHTEYQIVTDPGDVPAFLKWLSLASLLVYVAAFSIGLGPMPWLVLSEIFPGGIRGRAMALTSSMNWGINLLISLTFLTVTDLIGLPWVCFIYTIMSLASLLFVVMFIPETKGCSLEQISMELAKVNYVKNNICFMSHHQEELVPKQPQKRKPQEQLLECNKLCGRGQSRQLSPET.

A disordered region spans residues 1–29 (MVPVENTEGPSLLNQKGTAVETEGSGSRH). The Cytoplasmic segment spans residues 1 to 44 (MVPVENTEGPSLLNQKGTAVETEGSGSRHPPWARGCGMFTFLSS). The span at 8-17 (EGPSLLNQKG) shows a compositional bias: polar residues. Residues 45-65 (VTAAVSGLLVGYELGIISGAL) traverse the membrane as a helical segment. At 66–80 (LQIKTLLALSCHEQE) the chain is on the extracellular side. A helical transmembrane segment spans residues 81 to 101 (MVVSSLVIGALLASLTGGVLI). At 102–115 (DRYGRRTAIILSSC) the chain is on the cytoplasmic side. Residues 116 to 136 (LLGLGSLVLILSLSYTVLIVG) form a helical membrane-spanning segment. Position 137 (R137) is a topological domain, extracellular. The helical transmembrane segment at 138–158 (IAIGVSISLSSIATCVYIAEI) threads the bilayer. Over 159–172 (APQHRRGLLVSLNE) the chain is Cytoplasmic. A helical transmembrane segment spans residues 173-193 (LMIVIGILSAYISNYAFANVF). The Extracellular segment spans residues 194–197 (HGWK). A helical transmembrane segment spans residues 198 to 218 (YMFGLVIPLGVLQAIAMYFLP). The Cytoplasmic segment spans residues 219 to 278 (PSPRFLVMKGQEGAASKVLGRLRALSDTTEELTVIKSSLKDEYQYSFWDLFRSKDNMRTR). Residues 279 to 299 (IMIGLTLVFFVQITGQPNILF) traverse the membrane as a helical segment. The Extracellular segment spans residues 300-317 (YASTVLKSVGFQSNEAAS). A helical transmembrane segment spans residues 318–338 (LASTGVGVVKVISTIPATLLV). Residues 339 to 345 (DHVGSKT) are Cytoplasmic-facing. A helical membrane pass occupies residues 346 to 366 (FLCIGSSVMAASLVTMGIVNL). Topologically, residues 367–466 (NIHMNFTHIC…PAFLKWLSLA (100 aa)) are extracellular. N-linked (GlcNAc...) asparagine glycans are attached at residues N371, N383, N396, and N401. A helical transmembrane segment spans residues 467–487 (SLLVYVAAFSIGLGPMPWLVL). The Cytoplasmic segment spans residues 488-498 (SEIFPGGIRGR). Residues 499–519 (AMALTSSMNWGINLLISLTFL) traverse the membrane as a helical segment. Topologically, residues 520–528 (TVTDLIGLP) are extracellular. A helical membrane pass occupies residues 529–549 (WVCFIYTIMSLASLLFVVMFI). Residues 550–617 (PETKGCSLEQ…GQSRQLSPET (68 aa)) are Cytoplasmic-facing.

It belongs to the major facilitator superfamily. Sugar transporter (TC 2.A.1.1) family. Glucose transporter subfamily. Predominantly expressed in skeletal muscle, heart and prostate, with lower levels in brain, placenta and kidney.

Its subcellular location is the cell membrane. The protein resides in the endomembrane system. It localises to the cytoplasm. It is found in the perinuclear region. The catalysed reaction is D-glucose(out) = D-glucose(in). Functionally, insulin-independent facilitative glucose transporter. The chain is Solute carrier family 2, facilitated glucose transporter member 12 from Homo sapiens (Human).